We begin with the raw amino-acid sequence, 66 residues long: MQVSVQGNDVDKALRLLKRKLQTEGFFKEIKKRKHYEKPSVKKKRKQMEAERKRRKAQRFRKPDRD.

The segment covering 34-46 (KHYEKPSVKKKRK) has biased composition (basic residues). The disordered stretch occupies residues 34–66 (KHYEKPSVKKKRKQMEAERKRRKAQRFRKPDRD).

The protein belongs to the bacterial ribosomal protein bS21 family.

In Geobacter sulfurreducens (strain ATCC 51573 / DSM 12127 / PCA), this protein is Small ribosomal subunit protein bS21A.